Consider the following 243-residue polypeptide: 35 kDa gas vesicle protein (243 aa).

Belongs to the gas vesicle GvpC family.

The protein resides in the gas vesicle shell. Functionally, may confer stability to the gas vesicle shells. Gas vesicles are small, hollow, gas filled protein structures that are found in several microbial planktonic microorganisms. They allow the positioning of the organism at the favorable depth for growth. The chain is 35 kDa gas vesicle protein from Dactylococcopsis salina (strain PCC 8305) (Myxobactron salinum).